A 212-amino-acid polypeptide reads, in one-letter code: ATP synthase subunit 5, mitochondrial (212 aa).

The N-terminal 17 residues, Met-1–Ala-17, are a transit peptide targeting the mitochondrion.

Belongs to the ATPase delta chain family. F-type ATPases have 2 components, CF(1) - the catalytic core - and CF(0) - the membrane proton channel. CF(1) has five subunits: alpha(3), beta(3), gamma(1), delta(1), epsilon(1). CF(0) has three main subunits: a, b and c.

It localises to the mitochondrion. The protein resides in the mitochondrion inner membrane. Functionally, mitochondrial membrane ATP synthase (F(1)F(0) ATP synthase or Complex V) produces ATP from ADP in the presence of a proton gradient across the membrane which is generated by electron transport complexes of the respiratory chain. F-type ATPases consist of two structural domains, F(1) - containing the extramembraneous catalytic core and F(0) - containing the membrane proton channel, linked together by a central stalk and a peripheral stalk. During catalysis, ATP synthesis in the catalytic domain of F(1) is coupled via a rotary mechanism of the central stalk subunits to proton translocation. Part of the complex F(0) domain and the peripheric stalk, which acts as a stator to hold the catalytic alpha(3)beta(3) subcomplex and subunit a/ATP6 static relative to the rotary elements. This Saccharomyces cerevisiae (strain ATCC 204508 / S288c) (Baker's yeast) protein is ATP synthase subunit 5, mitochondrial (ATP5).